A 444-amino-acid chain; its full sequence is Viral protein kinase (444 aa).

The disordered stretch occupies residues 1–25 (MRWKRMERRPPLTPLRRSRTQSSGG). ATP is bound by residues 90 to 98 (LGRGAFGII) and K108. D201 acts as the Proton acceptor in catalysis.

Interacts with protein K-bZIP/K8. Interacts with host beta-catenin/CTNNB1. In terms of processing, AUtophosphorylated.

It is found in the host nucleus. It catalyses the reaction L-seryl-[protein] + ATP = O-phospho-L-seryl-[protein] + ADP + H(+). It carries out the reaction L-threonyl-[protein] + ATP = O-phospho-L-threonyl-[protein] + ADP + H(+). Its function is as follows. Serine/threonine protein kinase that plays a role in viral gene expression, viral DNA replication and encapsidation, and nuclear egress of virions. Regulates host transcriptional activity through interactions with RNA helicase and c-Jun N-terminal kinase (JNK) and viral transcriptional activity through interactions with the viral protein K-bZIP/K8. Induces host chromosome condensation and phosphorylation of histone H3. Phosphorylates the DNA polymerase processivity factor hence modulating its processivity function. Inhibits the host Wnt signaling pathway via direct interactions with beta-catenin/CTNNB1 while the kinase activity of vPK is not required for this inhibitory activity. Also phosphorylates host SAMHD1 and thereby counteracts its antiviral effect by reducing its dNTP hydrolase activity. This Human herpesvirus 8 type P (isolate GK18) (HHV-8) protein is Viral protein kinase (vPK).